The following is a 346-amino-acid chain: Phosphoribosylformylglycinamidine cyclo-ligase (346 aa).

The protein belongs to the AIR synthase family.

The protein localises to the cytoplasm. It carries out the reaction 2-formamido-N(1)-(5-O-phospho-beta-D-ribosyl)acetamidine + ATP = 5-amino-1-(5-phospho-beta-D-ribosyl)imidazole + ADP + phosphate + H(+). Its pathway is purine metabolism; IMP biosynthesis via de novo pathway; 5-amino-1-(5-phospho-D-ribosyl)imidazole from N(2)-formyl-N(1)-(5-phospho-D-ribosyl)glycinamide: step 2/2. In Bacillus cereus (strain G9842), this protein is Phosphoribosylformylglycinamidine cyclo-ligase.